We begin with the raw amino-acid sequence, 1295 residues long: Protein glp-1 (1295 aa).

The signal sequence occupies residues 1 to 15; the sequence is MRVLLILLAFFAPIA. Topologically, residues 16–764 are extracellular; sequence SQLMGGECGR…NEIDEGWSRS (749 aa). EGF-like domains lie at 19–58, 117–152, 154–190, and 190–230; these read MGGE…AFCE, GVNP…SYCE, GIDH…RYCE, and ERTE…EFCN. Disulfide bonds link C23/C35, C29/C46, C48/C57, C121/C131, C126/C140, C142/C151, C158/C169, C163/C178, C180/C189, C201/C206, C220/C229, C236/C248, C242/C257, C259/C268, C275/C286, C280/C296, C298/C307, C329/C342, C336/C347, C349/C358, C373/C384, C378/C394, C396/C405, C411/C422, C416/C431, C433/C442, C450/C461, C455/C467, C469/C478, C496/C519, C501/C514, C510/C526, C536/C560, C542/C555, C551/C567, C582/C595, and C591/C607. The EGF-like 5; calcium-binding domain occupies 232 to 269; it reads DKNECLIEETCVNNSTCFNLHGDFTCTCKPGYAGKYCE. Residues N244 and N245 are each glycosylated (N-linked (GlcNAc...) asparagine). EGF-like domains follow at residues 271–308, 316–359, 369–406, 407–443, and 446–479; these read AIDM…QRCE, GGIH…DRCE, DIQS…LNCE, QHLL…DYCE, and DRQL…PTCE. An N-linked (GlcNAc...) asparagine glycan is attached at N333. N381 carries N-linked (GlcNAc...) asparagine glycosylation. LNR repeat units lie at residues 496–532, 536–577, and 581–612; these read CEQR…GQRP, CQYP…CPAH, and HCIE…NGTE. N-linked (GlcNAc...) asparagine glycosylation is found at N609 and N675. Residues 765–786 traverse the membrane as a helical segment; sequence QVILFACIAFLAFGTVVAGVIA. The Cytoplasmic portion of the chain corresponds to 787–1295; sequence KNGPERSRKR…AEQMNGSFYC (509 aa). ANK repeat units follow at residues 961–990, 994–1023, 1030–1062, 1074–1103, and 1107–1136; these read DENT…NPTI, SERS…LLKE, NGMT…KLDY, KGRT…NKDK, and DGRT…SLGI. A disordered region spans residues 1177-1244; sequence IVKSGHGAKS…TTSTPNRMET (68 aa). Residues 1201-1210 are compositionally biased toward polar residues; it reads KTPTSAASSR. Low complexity predominate over residues 1221–1239; that stretch reads DGSFSSPSPHYYPTTTSTP.

As to quaternary structure, interacts with sel-10. When activated, the glp-1/Notch intracellular domain (NICD) may become a component of a complex consisting of at least the NICD, lag-1 and lag-3. In terms of processing, upon binding its ligands, it is cleaved (S2 cleavage) in its extracellular domain, close to the transmembrane domain. S2 cleavage is probably mediated by the metalloproteases adm-4 and sup-17. It is then cleaved (S3 cleavage) downstream of its transmembrane domain, releasing it from the cell membrane; S3 cleavage requires a multiprotein gamma-secretase complex, which may include presenilin sel-12. Expressed in the distal mitotic region of the germ line. May be absent from the gonadal distal tip cell (DTC).

Its subcellular location is the cell membrane. It localises to the cell projection. It is found in the axon. The protein resides in the nucleus. In terms of biological role, essential signaling protein which has a major role in germline and embryonic development; involved in cell fate decisions that require cell-cell interactions. Probable membrane-bound receptor for putative ligands lag-2 and apx-1. Upon ligand activation, and releasing from the cell membrane, the glp-1/Notch intracellular domain (NICD) probably forms a transcriptional activator complex with lag-1 and lag-3 and regulates expression of various genes; targets in the germline include lst-1 and sygl-1. Involved in the specification of the cell fates of the blastomeres, ABa and ABp. Proper signaling by glp-1 induces ABa descendants to produce anterior pharyngeal cells, and ABp descendants to adopt a different fate. Contributes to the establishment of the dorsal-ventral axis in early embryos. Required in postmitotic neurons in order to maintain the developmentally arrested larval state known as dauer, probably in response to lag-2. Regulates germ cell mitotic proliferation probably by regulating MAP kinase phosphatase lip-1 expression. Required for oocyte growth control. Plays a negative role in lifespan. The polypeptide is Protein glp-1 (Caenorhabditis elegans).